The following is a 325-amino-acid chain: ATP synthase gamma chain (325 aa).

The protein belongs to the ATPase gamma chain family. F-type ATPases have 2 components, CF(1) - the catalytic core - and CF(0) - the membrane proton channel. CF(1) has five subunits: alpha(3), beta(3), gamma(1), delta(1), epsilon(1). CF(0) has three main subunits: a, b and c.

Its subcellular location is the cell membrane. Produces ATP from ADP in the presence of a proton gradient across the membrane. The gamma chain is believed to be important in regulating ATPase activity and the flow of protons through the CF(0) complex. The polypeptide is ATP synthase gamma chain (Corynebacterium urealyticum (strain ATCC 43042 / DSM 7109)).